Here is a 453-residue protein sequence, read N- to C-terminus: Putative dipeptidase UREG_03382 (453 aa).

The tract at residues 1-33 (MSTRDHVKQSPMPVQEGYPRSSKEFSPPSSRSR) is disordered. A helical transmembrane segment spans residues 41 to 63 (LTMSLLIAAGAATFSKYIFPLGS). Residues H95, D97, and E208 each coordinate Zn(2+). C147 and C223 are oxidised to a cystine. Position 221 (H221) interacts with substrate. Zn(2+) contacts are provided by H265 and H286. R297 and D357 together coordinate substrate. Residues N370 and N443 are each glycosylated (N-linked (GlcNAc...) asparagine).

The protein belongs to the metallo-dependent hydrolases superfamily. Peptidase M19 family. Requires Zn(2+) as cofactor.

It is found in the membrane. The enzyme catalyses an L-aminoacyl-L-amino acid + H2O = 2 an L-alpha-amino acid. Hydrolyzes a wide range of dipeptides. The polypeptide is Putative dipeptidase UREG_03382 (Uncinocarpus reesii (strain UAMH 1704)).